Reading from the N-terminus, the 325-residue chain is Tagatose 1,6-diphosphate aldolase 1 (325 aa).

Belongs to the aldolase LacD family.

The enzyme catalyses D-tagatofuranose 1,6-bisphosphate = D-glyceraldehyde 3-phosphate + dihydroxyacetone phosphate. The protein operates within carbohydrate metabolism; D-tagatose 6-phosphate degradation; D-glyceraldehyde 3-phosphate and glycerone phosphate from D-tagatose 6-phosphate: step 2/2. The chain is Tagatose 1,6-diphosphate aldolase 1 (lacD1) from Streptococcus pyogenes serotype M3 (strain ATCC BAA-595 / MGAS315).